Here is a 629-residue protein sequence, read N- to C-terminus: tRNA uridine 5-carboxymethylaminomethyl modification enzyme MnmG (629 aa).

13–18 serves as a coordination point for FAD; the sequence is GGGHAG. An NAD(+)-binding site is contributed by 273 to 287; sequence GPRYCPSIEDKIVRF.

The protein belongs to the MnmG family. As to quaternary structure, homodimer. Heterotetramer of two MnmE and two MnmG subunits. FAD serves as cofactor.

The protein resides in the cytoplasm. NAD-binding protein involved in the addition of a carboxymethylaminomethyl (cmnm) group at the wobble position (U34) of certain tRNAs, forming tRNA-cmnm(5)s(2)U34. The sequence is that of tRNA uridine 5-carboxymethylaminomethyl modification enzyme MnmG from Pseudoalteromonas translucida (strain TAC 125).